The chain runs to 409 residues: Peptidase T (409 aa).

Position 78 (H78) interacts with Zn(2+). The active site involves D80. D140 serves as a coordination point for Zn(2+). E173 functions as the Proton acceptor in the catalytic mechanism. Positions 174, 196, and 379 each coordinate Zn(2+).

This sequence belongs to the peptidase M20B family. The cofactor is Zn(2+).

The protein resides in the cytoplasm. The enzyme catalyses Release of the N-terminal residue from a tripeptide.. Its function is as follows. Cleaves the N-terminal amino acid of tripeptides. The polypeptide is Peptidase T (Salmonella choleraesuis (strain SC-B67)).